The following is a 719-amino-acid chain: Phosphoribosylformylglycinamidine synthase subunit PurL (719 aa).

The active site involves His47. The ATP site is built by Tyr50 and Lys89. Residue Glu91 coordinates Mg(2+). Substrate is bound by residues 92-95 (SHNH) and Arg114. His93 acts as the Proton acceptor in catalysis. Asp115 is a Mg(2+) binding site. Gln238 contributes to the substrate binding site. Asp266 provides a ligand contact to Mg(2+). 310 to 312 (ESQ) serves as a coordination point for substrate. ATP-binding residues include Asp488 and Gly525. Asn526 serves as a coordination point for Mg(2+). A substrate-binding site is contributed by Ser528.

Belongs to the FGAMS family. Monomer. Part of the FGAM synthase complex composed of 1 PurL, 1 PurQ and 2 PurS subunits.

It localises to the cytoplasm. It carries out the reaction N(2)-formyl-N(1)-(5-phospho-beta-D-ribosyl)glycinamide + L-glutamine + ATP + H2O = 2-formamido-N(1)-(5-O-phospho-beta-D-ribosyl)acetamidine + L-glutamate + ADP + phosphate + H(+). It functions in the pathway purine metabolism; IMP biosynthesis via de novo pathway; 5-amino-1-(5-phospho-D-ribosyl)imidazole from N(2)-formyl-N(1)-(5-phospho-D-ribosyl)glycinamide: step 1/2. Functionally, part of the phosphoribosylformylglycinamidine synthase complex involved in the purines biosynthetic pathway. Catalyzes the ATP-dependent conversion of formylglycinamide ribonucleotide (FGAR) and glutamine to yield formylglycinamidine ribonucleotide (FGAM) and glutamate. The FGAM synthase complex is composed of three subunits. PurQ produces an ammonia molecule by converting glutamine to glutamate. PurL transfers the ammonia molecule to FGAR to form FGAM in an ATP-dependent manner. PurS interacts with PurQ and PurL and is thought to assist in the transfer of the ammonia molecule from PurQ to PurL. The protein is Phosphoribosylformylglycinamidine synthase subunit PurL of Cereibacter sphaeroides (strain ATCC 17025 / ATH 2.4.3) (Rhodobacter sphaeroides).